The sequence spans 743 residues: 1,4-alpha-glucan branching enzyme GlgB (743 aa).

Catalysis depends on Asp423, which acts as the Nucleophile. The active-site Proton donor is Glu476.

The protein belongs to the glycosyl hydrolase 13 family. GlgB subfamily. In terms of assembly, monomer.

The enzyme catalyses Transfers a segment of a (1-&gt;4)-alpha-D-glucan chain to a primary hydroxy group in a similar glucan chain.. It participates in glycan biosynthesis; glycogen biosynthesis. Functionally, catalyzes the formation of the alpha-1,6-glucosidic linkages in glycogen by scission of a 1,4-alpha-linked oligosaccharide from growing alpha-1,4-glucan chains and the subsequent attachment of the oligosaccharide to the alpha-1,6 position. This is 1,4-alpha-glucan branching enzyme GlgB from Pseudomonas fluorescens (strain ATCC BAA-477 / NRRL B-23932 / Pf-5).